Consider the following 605-residue polypeptide: DNA mismatch repair protein MutL (605 aa).

Belongs to the DNA mismatch repair MutL/HexB family.

Its function is as follows. This protein is involved in the repair of mismatches in DNA. It is required for dam-dependent methyl-directed DNA mismatch repair. May act as a 'molecular matchmaker', a protein that promotes the formation of a stable complex between two or more DNA-binding proteins in an ATP-dependent manner without itself being part of a final effector complex. This chain is DNA mismatch repair protein MutL, found in Rhizobium meliloti (strain 1021) (Ensifer meliloti).